Here is a 223-residue protein sequence, read N- to C-terminus: Ribosome assembly factor mrt4 (223 aa).

It belongs to the universal ribosomal protein uL10 family. As to quaternary structure, associates with the pre-60S ribosomal particle.

The protein localises to the nucleus. It is found in the nucleolus. Its subcellular location is the cytoplasm. Its function is as follows. Component of the ribosome assembly machinery. Nuclear paralog of the ribosomal protein P0, it binds pre-60S subunits at an early stage of assembly in the nucleolus, and is replaced by P0 in cytoplasmic pre-60S subunits and mature 80S ribosomes. The sequence is that of Ribosome assembly factor mrt4 from Dictyostelium discoideum (Social amoeba).